We begin with the raw amino-acid sequence, 109 residues long: MQQFEWIHAAWLAVAIVLEIIANVFLKFSDGFRRKVYGILSLAAVLGAFSALSQAVKGIDLSVAYALWGGFGIAATIAAGWVLFGQRLNNKGWAGLILLVAGMVLIKLA.

The next 4 helical transmembrane spans lie at 6–26 (WIHA…NVFL), 36–56 (VYGI…SQAV), 64–84 (AYAL…WVLF), and 88–108 (LNNK…LIKL).

Belongs to the drug/metabolite transporter (DMT) superfamily. Small multidrug resistance (SMR) (TC 2.A.7.1) family. MdtI subfamily. As to quaternary structure, forms a complex with MdtJ.

The protein resides in the cell inner membrane. In terms of biological role, catalyzes the excretion of spermidine. In Klebsiella pneumoniae (strain 342), this protein is Spermidine export protein MdtI.